Here is a 123-residue protein sequence, read N- to C-terminus: Highly acidic elicitin 20 (123 aa).

A signal peptide spans 1–20 (MQFTALFAATAVALVGSVSA). 3 disulfide bridges follow: Cys-23–Cys-91, Cys-47–Cys-76, and Cys-71–Cys-115.

It belongs to the elicitin family.

It localises to the secreted. Induces local and distal defense responses (incompatible hypersensitive reaction) in plants from the solanaceae and cruciferae families. Elicits leaf necrosis and causes the accumulation of pathogenesis-related proteins. Might interact with the lipidic molecules of the plasma membrane. The protein is Highly acidic elicitin 20 (B20) of Phytophthora cryptogea.